Reading from the N-terminus, the 315-residue chain is Methionyl-tRNA formyltransferase (315 aa).

113–116 contributes to the (6S)-5,6,7,8-tetrahydrofolate binding site; the sequence is SLLP.

Belongs to the Fmt family.

The catalysed reaction is L-methionyl-tRNA(fMet) + (6R)-10-formyltetrahydrofolate = N-formyl-L-methionyl-tRNA(fMet) + (6S)-5,6,7,8-tetrahydrofolate + H(+). Attaches a formyl group to the free amino group of methionyl-tRNA(fMet). The formyl group appears to play a dual role in the initiator identity of N-formylmethionyl-tRNA by promoting its recognition by IF2 and preventing the misappropriation of this tRNA by the elongation apparatus. The protein is Methionyl-tRNA formyltransferase of Escherichia coli (strain SMS-3-5 / SECEC).